A 31-amino-acid polypeptide reads, in one-letter code: Cyclotide mden-J (31 aa).

The cyclopeptide (Gly-Asn) cross-link spans 1-31 (GSIPCGESCVYIPCISSIVGCACKSKVCYKN). 3 disulfides stabilise this stretch: cysteine 5–cysteine 21, cysteine 9–cysteine 23, and cysteine 14–cysteine 28.

The protein belongs to the cyclotide family. Bracelet subfamily. This is a cyclic peptide.

Functionally, probably participates in a plant defense mechanism. The polypeptide is Cyclotide mden-J (Melicytus dentatus (Tree violet)).